The chain runs to 170 residues: Small ribosomal subunit protein uS3mB (170 aa).

A mitochondrion-targeting transit peptide spans 1–30 (MAAPVMSAFGRLQGLIRTERSLLTHVQSRC).

It belongs to the universal ribosomal protein uS3 family. As to quaternary structure, component of the mitochondrial ribosome small subunit (28S) which comprises a 12S rRNA and about 30 distinct proteins.

The protein localises to the mitochondrion. The sequence is that of Small ribosomal subunit protein uS3mB (mrps24-b) from Xenopus laevis (African clawed frog).